The following is a 451-amino-acid chain: Bifunctional protein GlmU (451 aa).

The pyrophosphorylase stretch occupies residues 1–231; the sequence is MDSPLAIIVL…ADEVAGINSR (231 aa). UDP-N-acetyl-alpha-D-glucosamine-binding positions include 10 to 13, lysine 24, glutamine 74, 79 to 80, 102 to 104, glycine 142, glutamate 156, asparagine 171, and asparagine 229; these read LAAG, GT, and YGD. Position 104 (aspartate 104) interacts with Mg(2+). Asparagine 229 lines the Mg(2+) pocket. A linker region spans residues 232–252; that stretch reads GELAEAEGRWQQRRRAAAMAD. The N-acetyltransferase stretch occupies residues 253–451; it reads GASLIAPETV…MKKKKAEKKS (199 aa). UDP-N-acetyl-alpha-D-glucosamine-binding residues include arginine 318 and lysine 336. Histidine 348 acts as the Proton acceptor in catalysis. UDP-N-acetyl-alpha-D-glucosamine is bound by residues tyrosine 351 and asparagine 362. Residues alanine 365, 371–372, serine 390, alanine 408, and arginine 425 contribute to the acetyl-CoA site; that span reads NY.

The protein in the N-terminal section; belongs to the N-acetylglucosamine-1-phosphate uridyltransferase family. It in the C-terminal section; belongs to the transferase hexapeptide repeat family. As to quaternary structure, homotrimer. Mg(2+) is required as a cofactor.

The protein resides in the cytoplasm. The enzyme catalyses alpha-D-glucosamine 1-phosphate + acetyl-CoA = N-acetyl-alpha-D-glucosamine 1-phosphate + CoA + H(+). The catalysed reaction is N-acetyl-alpha-D-glucosamine 1-phosphate + UTP + H(+) = UDP-N-acetyl-alpha-D-glucosamine + diphosphate. Its pathway is nucleotide-sugar biosynthesis; UDP-N-acetyl-alpha-D-glucosamine biosynthesis; N-acetyl-alpha-D-glucosamine 1-phosphate from alpha-D-glucosamine 6-phosphate (route II): step 2/2. It participates in nucleotide-sugar biosynthesis; UDP-N-acetyl-alpha-D-glucosamine biosynthesis; UDP-N-acetyl-alpha-D-glucosamine from N-acetyl-alpha-D-glucosamine 1-phosphate: step 1/1. It functions in the pathway bacterial outer membrane biogenesis; LPS lipid A biosynthesis. Functionally, catalyzes the last two sequential reactions in the de novo biosynthetic pathway for UDP-N-acetylglucosamine (UDP-GlcNAc). The C-terminal domain catalyzes the transfer of acetyl group from acetyl coenzyme A to glucosamine-1-phosphate (GlcN-1-P) to produce N-acetylglucosamine-1-phosphate (GlcNAc-1-P), which is converted into UDP-GlcNAc by the transfer of uridine 5-monophosphate (from uridine 5-triphosphate), a reaction catalyzed by the N-terminal domain. This is Bifunctional protein GlmU from Novosphingobium aromaticivorans (strain ATCC 700278 / DSM 12444 / CCUG 56034 / CIP 105152 / NBRC 16084 / F199).